The following is a 179-amino-acid chain: Photosystem I assembly protein Ycf3 (179 aa).

TPR repeat units lie at residues 29 to 62 (AFSY…EEDP), 66 to 99 (SYTL…NSNL), and 126 to 159 (NLEI…APDN).

Belongs to the Ycf3 family.

It localises to the plastid. The protein localises to the chloroplast thylakoid membrane. In terms of biological role, essential for the assembly of the photosystem I (PSI) complex. May act as a chaperone-like factor to guide the assembly of the PSI subunits. The protein is Photosystem I assembly protein Ycf3 of Trieres chinensis (Marine centric diatom).